The primary structure comprises 190 residues: Probable oligoribonuclease (190 aa).

The region spanning methionine 19–leucine 181 is the Exonuclease domain. Tyrosine 140 is an active-site residue.

This sequence belongs to the oligoribonuclease family.

In terms of biological role, 3'-to-5' exoribonuclease specific for small oligoribonucleotides. This is Probable oligoribonuclease (rexo2-1) from Dictyostelium discoideum (Social amoeba).